We begin with the raw amino-acid sequence, 338 residues long: UPF0284 protein PAE0372 (338 aa).

It belongs to the UPF0284 family.

This is UPF0284 protein PAE0372 from Pyrobaculum aerophilum (strain ATCC 51768 / DSM 7523 / JCM 9630 / CIP 104966 / NBRC 100827 / IM2).